Consider the following 360-residue polypeptide: MTATLERRESISLWERFCSWITSTENRLYIGWFGVLMIPTLLTATTCYIIAFIAAPPVDIDGIREPVAGSLLYGNNIISGAVIPSSNAIGVHFYPVWEAASVDEWLYNGGPYQLIVLHFLLGVASYMGREWELSYRLGMRPWIFVAFSAPVAAASAVFLVYPIGQGSFSDGMPLGISGTFNFMLVFQAEHNILMHPFHMAGVAGVFGGSLFSAMHGSLVTSSLIRETSEVESTNYGYKFGQEEETYNIVAAHGYFGRLIFQYASFNNSRALHFFLAAWPVVRIWLTALGVTTMAFNLNGFNFNQSVVDSQGRVINTWADIINRADLGMEVMHERNAHNFPLDLAAGEVLPVAVSAPAVHA.

3 consecutive transmembrane segments (helical) span residues Y29–T46, H118–L133, and W142–A156. A chlorophyll a-binding site is contributed by H118. Position 126 (Y126) interacts with pheophytin a. Residues D170 and E189 each contribute to the [CaMn4O5] cluster site. Residues F197 to L218 traverse the membrane as a helical segment. H198 contributes to the chlorophyll a binding site. A quinone is bound by residues H215 and S264–F265. Residue H215 coordinates Fe cation. Residue H272 participates in Fe cation binding. Residues F274 to L288 form a helical membrane-spanning segment. [CaMn4O5] cluster contacts are provided by H332, E333, D342, and A344. Residues A345–A360 constitute a propeptide that is removed on maturation.

Belongs to the reaction center PufL/M/PsbA/D family. PSII is composed of 1 copy each of membrane proteins PsbA, PsbB, PsbC, PsbD, PsbE, PsbF, PsbH, PsbI, PsbJ, PsbK, PsbL, PsbM, PsbT, PsbX, PsbY, PsbZ, Psb30/Ycf12, at least 3 peripheral proteins of the oxygen-evolving complex and a large number of cofactors. It forms dimeric complexes. The cofactor is The D1/D2 heterodimer binds P680, chlorophylls that are the primary electron donor of PSII, and subsequent electron acceptors. It shares a non-heme iron and each subunit binds pheophytin, quinone, additional chlorophylls, carotenoids and lipids. D1 provides most of the ligands for the Mn4-Ca-O5 cluster of the oxygen-evolving complex (OEC). There is also a Cl(-1) ion associated with D1 and D2, which is required for oxygen evolution. The PSII complex binds additional chlorophylls, carotenoids and specific lipids.. In terms of processing, tyr-161 forms a radical intermediate that is referred to as redox-active TyrZ, YZ or Y-Z. C-terminally processed by CTPA; processing is essential to allow assembly of the oxygen-evolving complex and thus photosynthetic growth.

It is found in the plastid. The protein localises to the chloroplast thylakoid membrane. It carries out the reaction 2 a plastoquinone + 4 hnu + 2 H2O = 2 a plastoquinol + O2. In terms of biological role, photosystem II (PSII) is a light-driven water:plastoquinone oxidoreductase that uses light energy to abstract electrons from H(2)O, generating O(2) and a proton gradient subsequently used for ATP formation. It consists of a core antenna complex that captures photons, and an electron transfer chain that converts photonic excitation into a charge separation. The D1/D2 (PsbA/PsbD) reaction center heterodimer binds P680, the primary electron donor of PSII as well as several subsequent electron acceptors. The polypeptide is Photosystem II protein D1 (Bumilleriopsis filiformis (Yellow-green alga)).